The sequence spans 384 residues: MSEDFYDVLGVSRDASKDQIKNAYRKKAAKYHPDVSDEEDAEEKFKKVQKAKEVLTDDEKRQMYDQLGHERFQQAQKRGAGGGGGGRGQGNPFGGGGNPFGGMGGGGFEDIFNNLFNGGGGQRRSRPQQGRDVAQRITIDLEDAYHGVERDVTIRRREVCPECDGEGHPADADVNTCSECNGSGQQTTVQQTPFGRVQQTTTCRACGGEGKTYSEDCSECRGSGRVRRTRDVTITIPAGFRDGQRLRYRGEGEPGENGGPNGDLFVEVNVRDHEEFDRDGDDLQYTHPISFPQAVFGATVEVPTLDGEAELKVPAGTQSGSTFTVSGAGMPHLDGRGNGDLHVEIHVVTPEDLNSEQREALKQFAEAGGEEVKESLFQKLKNSL.

In terms of domain architecture, J spans 4–68 (DFYDVLGVSR…EKRQMYDQLG (65 aa)). 2 disordered regions span residues 74–105 (QAQK…GMGG) and 113–132 (NNLF…QGRD). Positions 79–105 (GAGGGGGGRGQGNPFGGGGNPFGGMGG) are enriched in gly residues. The CR-type zinc-finger motif lies at 147–229 (GVERDVTIRR…CRGSGRVRRT (83 aa)). Zn(2+)-binding residues include C160, C163, C177, C180, C203, C206, C217, and C220. CXXCXGXG motif repeat units follow at residues 160–167 (CPECDGEG), 177–184 (CSECNGSG), 203–210 (CRACGGEG), and 217–224 (CSECRGSG).

This sequence belongs to the DnaJ family. Homodimer. It depends on Zn(2+) as a cofactor.

Its subcellular location is the cytoplasm. In terms of biological role, participates actively in the response to hyperosmotic and heat shock by preventing the aggregation of stress-denatured proteins and by disaggregating proteins, also in an autonomous, DnaK-independent fashion. Unfolded proteins bind initially to DnaJ; upon interaction with the DnaJ-bound protein, DnaK hydrolyzes its bound ATP, resulting in the formation of a stable complex. GrpE releases ADP from DnaK; ATP binding to DnaK triggers the release of the substrate protein, thus completing the reaction cycle. Several rounds of ATP-dependent interactions between DnaJ, DnaK and GrpE are required for fully efficient folding. Also involved, together with DnaK and GrpE, in the DNA replication of plasmids through activation of initiation proteins. The chain is Chaperone protein DnaJ from Haloferax mediterranei (strain ATCC 33500 / DSM 1411 / JCM 8866 / NBRC 14739 / NCIMB 2177 / R-4) (Halobacterium mediterranei).